We begin with the raw amino-acid sequence, 158 residues long: Cyclic pyranopterin monophosphate synthase (158 aa).

Substrate-binding positions include 74–76 (MCH) and 112–113 (ME). D127 is an active-site residue.

Belongs to the MoaC family. Homohexamer; trimer of dimers.

The catalysed reaction is (8S)-3',8-cyclo-7,8-dihydroguanosine 5'-triphosphate = cyclic pyranopterin phosphate + diphosphate. The protein operates within cofactor biosynthesis; molybdopterin biosynthesis. Its function is as follows. Catalyzes the conversion of (8S)-3',8-cyclo-7,8-dihydroguanosine 5'-triphosphate to cyclic pyranopterin monophosphate (cPMP). This is Cyclic pyranopterin monophosphate synthase from Helicobacter pylori (strain P12).